A 79-amino-acid chain; its full sequence is Suppressor of tumorigenicity 20 protein (79 aa).

In terms of tissue distribution, expressed in leukocytes, lung, spleen, liver, heart, kidney, muscle and uterine cervix. Down-regulated in cervical cancer.

In terms of biological role, may act as a tumor suppressor. Promotes apoptosis of cancer cells. In Homo sapiens (Human), this protein is Suppressor of tumorigenicity 20 protein (ST20).